Consider the following 576-residue polypeptide: Proline--tRNA ligase (576 aa).

The protein belongs to the class-II aminoacyl-tRNA synthetase family. ProS type 1 subfamily. As to quaternary structure, homodimer.

It localises to the cytoplasm. It catalyses the reaction tRNA(Pro) + L-proline + ATP = L-prolyl-tRNA(Pro) + AMP + diphosphate. Catalyzes the attachment of proline to tRNA(Pro) in a two-step reaction: proline is first activated by ATP to form Pro-AMP and then transferred to the acceptor end of tRNA(Pro). As ProRS can inadvertently accommodate and process non-cognate amino acids such as alanine and cysteine, to avoid such errors it has two additional distinct editing activities against alanine. One activity is designated as 'pretransfer' editing and involves the tRNA(Pro)-independent hydrolysis of activated Ala-AMP. The other activity is designated 'posttransfer' editing and involves deacylation of mischarged Ala-tRNA(Pro). The misacylated Cys-tRNA(Pro) is not edited by ProRS. The protein is Proline--tRNA ligase of Thiobacillus denitrificans (strain ATCC 25259 / T1).